A 368-amino-acid polypeptide reads, in one-letter code: DNA replication and repair protein RecF (368 aa).

An ATP-binding site is contributed by 30-37 (GDNGAGKT).

This sequence belongs to the RecF family.

The protein localises to the cytoplasm. In terms of biological role, the RecF protein is involved in DNA metabolism; it is required for DNA replication and normal SOS inducibility. RecF binds preferentially to single-stranded, linear DNA. It also seems to bind ATP. The chain is DNA replication and repair protein RecF from Xanthomonas euvesicatoria pv. vesicatoria (strain 85-10) (Xanthomonas campestris pv. vesicatoria).